We begin with the raw amino-acid sequence, 945 residues long: Valine--tRNA ligase (945 aa).

Residues 42-52 carry the 'HIGH' region motif; sequence PNVTGTLHMGH. The 'KMSKS' region motif lies at 552–556; that stretch reads KMSKS. Lysine 555 serves as a coordination point for ATP. Residues 879-945 are a coiled coil; sequence DKATETARLS…VQTQLSKLKD (67 aa).

The protein belongs to the class-I aminoacyl-tRNA synthetase family. ValS type 1 subfamily. As to quaternary structure, monomer.

The protein localises to the cytoplasm. The catalysed reaction is tRNA(Val) + L-valine + ATP = L-valyl-tRNA(Val) + AMP + diphosphate. Functionally, catalyzes the attachment of valine to tRNA(Val). As ValRS can inadvertently accommodate and process structurally similar amino acids such as threonine, to avoid such errors, it has a 'posttransfer' editing activity that hydrolyzes mischarged Thr-tRNA(Val) in a tRNA-dependent manner. This Neisseria meningitidis serogroup A / serotype 4A (strain DSM 15465 / Z2491) protein is Valine--tRNA ligase.